The following is a 76-amino-acid chain: Small ribosomal subunit protein eS17 (76 aa).

Belongs to the eukaryotic ribosomal protein eS17 family.

The polypeptide is Small ribosomal subunit protein eS17 (Picrophilus torridus (strain ATCC 700027 / DSM 9790 / JCM 10055 / NBRC 100828 / KAW 2/3)).